A 227-amino-acid chain; its full sequence is Large ribosomal subunit protein bL25 (227 aa).

The disordered stretch occupies residues 1–22 (MAETKTLAAAARHGTGKGAARS).

It belongs to the bacterial ribosomal protein bL25 family. CTC subfamily. Part of the 50S ribosomal subunit; part of the 5S rRNA/L5/L18/L25 subcomplex. Contacts the 5S rRNA. Binds to the 5S rRNA independently of L5 and L18.

In terms of biological role, this is one of the proteins that binds to the 5S RNA in the ribosome where it forms part of the central protuberance. In Methylocella silvestris (strain DSM 15510 / CIP 108128 / LMG 27833 / NCIMB 13906 / BL2), this protein is Large ribosomal subunit protein bL25.